A 334-amino-acid chain; its full sequence is G2/mitotic-specific cyclin-1 (334 aa).

It belongs to the cyclin family. Cyclin AB subfamily.

Its function is as follows. Essential for the control of the cell cycle at the G2/M (mitosis) transition. This is G2/mitotic-specific cyclin-1 (CYC1) from Trypanosoma brucei brucei.